A 362-amino-acid chain; its full sequence is Erythritol/L-threitol dehydrogenase (362 aa).

7 residues coordinate Zn(2+): Cys-45, His-76, Glu-77, Cys-109, Cys-112, Cys-115, and Cys-123. 2 residues coordinate NAD(+): Ile-195 and Asp-215.

This sequence belongs to the zinc-containing alcohol dehydrogenase family. Zn(2+) serves as cofactor.

It catalyses the reaction erythritol + NAD(+) = D-erythrulose + NADH + H(+). It carries out the reaction L-threitol + NAD(+) = L-erythrulose + NADH + H(+). The protein operates within carbohydrate metabolism; erythritol degradation. Its pathway is carbohydrate metabolism; L-threitol degradation. Catalyzes the NAD-dependent reversible oxidation of erythritol and L-threitol. Involved in the degradation pathways of erythritol and L-threitol, that allow M.smegmatis to grow on these compounds as the sole carbon source. In Mycolicibacterium smegmatis (strain ATCC 700084 / mc(2)155) (Mycobacterium smegmatis), this protein is Erythritol/L-threitol dehydrogenase.